We begin with the raw amino-acid sequence, 416 residues long: Adenylosuccinate synthetase (416 aa).

GTP contacts are provided by residues 13 to 19 and 41 to 43; these read GDEGKGK and GHT. D14 acts as the Proton acceptor in catalysis. Positions 14 and 41 each coordinate Mg(2+). IMP-binding positions include 14–17, 39–42, T126, R140, Q220, T235, and R299; these read DEGK and NAGH. The Proton donor role is filled by H42. 295–301 serves as a coordination point for substrate; that stretch reads VSTGRKR. GTP is bound by residues R301, 327 to 329, and 405 to 407; these read KLD and STS.

Belongs to the adenylosuccinate synthetase family. In terms of assembly, homodimer. Mg(2+) is required as a cofactor.

It localises to the cytoplasm. It carries out the reaction IMP + L-aspartate + GTP = N(6)-(1,2-dicarboxyethyl)-AMP + GDP + phosphate + 2 H(+). It functions in the pathway purine metabolism; AMP biosynthesis via de novo pathway; AMP from IMP: step 1/2. In terms of biological role, plays an important role in the de novo pathway of purine nucleotide biosynthesis. Catalyzes the first committed step in the biosynthesis of AMP from IMP. This chain is Adenylosuccinate synthetase, found in Campylobacter jejuni subsp. jejuni serotype O:6 (strain 81116 / NCTC 11828).